Reading from the N-terminus, the 1007-residue chain is Glutamate receptor ionotropic, delta-2 (1007 aa).

Residues 1 to 23 (MEVFPFLLVLSVWWSRTWDSANA) form the signal peptide. An interaction with CBLN1 homotrimer region spans residues 24 to 345 (DSIIHIGAIF…NAFHKKLEDR (322 aa)). The Extracellular portion of the chain corresponds to 24–566 (DSIIHIGAIF…DMFACLAPFD (543 aa)). Disulfide bonds link cysteine 83–cysteine 355, cysteine 99–cysteine 131, and cysteine 298–cysteine 310. Asparagine 293 is a glycosylation site (N-linked (GlcNAc...) asparagine). N-linked (GlcNAc...) asparagine glycosylation occurs at asparagine 426. Residues glutamate 531, valine 534, and aspartate 535 each coordinate Ca(2+). Residues 567-587 (LSLWACIAGTVLLVGLLVYLL) form a helical membrane-spanning segment. The Cytoplasmic portion of the chain corresponds to 588 to 635 (NWLNPPRLQMGSMTSTTLYNSMWFVYGSFVQQGGEVPYTTLATRMMMG). The chain crosses the membrane as a helical span at residues 636-656 (AWWLFALIVISSYTANLAAFL). Over 657–830 (TITRIESSIQ…QKGGALDIKS (174 aa)) the chain is Extracellular. N-linked (GlcNAc...) asparagine glycans are attached at residues asparagine 713 and asparagine 716. Residues aspartate 753, aspartate 755, and serine 757 each contribute to the Ca(2+) site. Residues 831–851 (FAGVFCILAAGIVLSCFIAML) form a helical membrane-spanning segment. Residues 852–1007 (ETWWNKRKGS…GNDPDRGTSI (156 aa)) lie on the Cytoplasmic side of the membrane. At serine 883 the chain carries Phosphoserine. A Phosphothreonine modification is found at threonine 886. Serine 890 carries the post-translational modification Phosphoserine. Residues 921–991 (DFRNTHITTT…MSSIPYQPTP (71 aa)) are interaction with AP4M1. The short motif at 1005-1007 (TSI) is the PDZ-binding element. Serine 1006 carries the post-translational modification Phosphoserine.

This sequence belongs to the glutamate-gated ion channel (TC 1.A.10.1) family. GRID2 subfamily. Tetramer; dimer of dimers. Interacts with EML2, MAGI2 (via PDZ domains) and AP4M1. Interacts with BECN1, GOPC, GRID2IP, SHANK1 and SHANK2. Interacts with CBLN2, but not with CBLN4. Interacts with CBLN1 (via C1q domain); the interaction is CBLN1-NRX1 complex formation-dependent; CBLN1-binding is calcium-independent; CBLN1 hexamers anchor GRID2 N-terminal domain dimers to monomeric NRXN1 isoform beta; promotes synaptogenesis and mediates the D-Serine-dependent long term depression signals and AMPA receptor endocytosis.

Its subcellular location is the postsynaptic cell membrane. The enzyme catalyses Ca(2+)(in) = Ca(2+)(out). It carries out the reaction Na(+)(in) = Na(+)(out). In terms of biological role, member of the ionotropic glutamate receptor family, which plays a crucial role in synaptic organization and signal transduction in the central nervous system. Although it shares structural features with ionotropic glutamate receptors, does not bind glutamate as a primary ligand. Promotes synaptogenesis and mediates the D-Serine-dependent long term depression signals and AMPA receptor endocytosis of cerebellar parallel fiber-Purkinje cell (PF-PC) synapses through the NRX1B-CBLN1-GRID2 triad complex. In the presence of neurexins and cerebellins, forms cation-selective channels that are proposed to be gated by glycine and D-serine. However, recent research disputes this ligand-gated cation channel activity. Cation-selective ion channel activity can be triggered by GRM1 in Purkinje cells. The chain is Glutamate receptor ionotropic, delta-2 (GRID2) from Homo sapiens (Human).